Here is a 122-residue protein sequence, read N- to C-terminus: Large ribosomal subunit protein uL14 (122 aa).

The protein belongs to the universal ribosomal protein uL14 family. In terms of assembly, part of the 50S ribosomal subunit. Forms a cluster with proteins L3 and L19. In the 70S ribosome, L14 and L19 interact and together make contacts with the 16S rRNA in bridges B5 and B8.

Its function is as follows. Binds to 23S rRNA. Forms part of two intersubunit bridges in the 70S ribosome. In Buchnera aphidicola subsp. Schizaphis graminum (strain Sg), this protein is Large ribosomal subunit protein uL14.